We begin with the raw amino-acid sequence, 1040 residues long: Multidrug resistance protein MdtB (1040 aa).

12 helical membrane-spanning segments follow: residues 25–45 (LLMAAILLAGIIGYRFLPVAA), 347–367 (LMLAIALVVMIIYLFLRNIPA), 369–389 (IIPGVAVPLSLIGTFAVMVFL), 396–416 (LTLMALTIATGFVVDDAIVVI), 440–460 (IGFTIISLTFSLIAVLIPLLF), 472–492 (FAVTLAVAILISAVVSLTLTP), 537–557 (WLTLSVAFATLLLSIMLWIVI), 863–883 (LGSTVWLIVAAVVAMYIVLGV), 888–908 (FIHPITILSTLPTAGVGALLA), 910–930 (IIAGSELDIIAIIGIILLIGI), 968–988 (ILMTTLAALLGALPLMLSTGV), and 998–1018 (IAMVGGLLVSQVLTLFTTPVI).

It belongs to the resistance-nodulation-cell division (RND) (TC 2.A.6) family. MdtB subfamily. In terms of assembly, part of a tripartite efflux system composed of MdtA, MdtB and MdtC. MdtB forms a heteromultimer with MdtC.

Its subcellular location is the cell inner membrane. This chain is Multidrug resistance protein MdtB, found in Salmonella newport (strain SL254).